The chain runs to 700 residues: Polyribonucleotide nucleotidyltransferase (700 aa).

Mg(2+) is bound by residues Asp485 and Asp491. Positions 552–611 (PRITTLKINPEKIRDVIGKGGATIRALTEETGTTIELEDDGTVKIASANGDATKEAIRRI) constitute a KH domain. Residues 621–689 (GTVYNGKVVR…RQGRVRLSMK (69 aa)) form the S1 motif domain.

The protein belongs to the polyribonucleotide nucleotidyltransferase family. Component of the RNA degradosome, which is a multiprotein complex involved in RNA processing and mRNA degradation. Requires Mg(2+) as cofactor.

The protein localises to the cytoplasm. It catalyses the reaction RNA(n+1) + phosphate = RNA(n) + a ribonucleoside 5'-diphosphate. Its function is as follows. Involved in mRNA degradation. Catalyzes the phosphorolysis of single-stranded polyribonucleotides processively in the 3'- to 5'-direction. The polypeptide is Polyribonucleotide nucleotidyltransferase (Shewanella loihica (strain ATCC BAA-1088 / PV-4)).